Consider the following 195-residue polypeptide: MMAIRELKVCLLGDTGVGKSSIVCRFVQDHFDHNISPTIGASFMTKTVPCGNELHKFLIWDTAGQERFHSLAPMYYRGSAAAVIVYDITKQDSFHTLKKWVKELKEHGPENIVMAIAGNKCDLSDIREVPLKDAKEYAESIGAIVVETSAKNAINIEELFQGISRQIPPLGPQENGNSGGIKLGNQSLQASRRCC.

7 residues coordinate GTP: glycine 16, glycine 18, lysine 19, serine 20, serine 21, aspartate 32, and histidine 33. Serine 20 is a Mg(2+) binding site. 2 consecutive short sequence motifs (switch) follow at residues 30 to 42 (HFDH…IGAS) and 63 to 79 (AGQE…YRGS). At serine 36 the chain carries Phosphoserine. GTP is bound by residues threonine 38, glycine 64, asparagine 119, aspartate 122, alanine 150, and lysine 151. Mg(2+) is bound at residue threonine 38. The disordered stretch occupies residues 168-195 (PPLGPQENGNSGGIKLGNQSLQASRRCC). The segment covering 184–195 (GNQSLQASRRCC) has biased composition (polar residues). 2 S-geranylgeranyl cysteine lipidation sites follow: cysteine 194 and cysteine 195.

It belongs to the small GTPase superfamily. Rab family. Interacts with OCRL. Interacts (in GDP-bound form) with RIN3 and GAPVD1, which function as guanine exchange factors (GEF). Interacts with EGFR. Interacts with NGFR. Interacts (in GTP-bound form) with EEA1. Interacts (in GTP-bound form) with APPL2; interaction contributes to or enhances recruitment of APPL2 to the phagosomes; interaction enhances Fc-gamma receptor-mediated phagocytosis through PI3K/Akt signaling in macrophages. It depends on Mg(2+) as a cofactor. Detected in brain astrocytes (at protein level).

The protein localises to the early endosome. It localises to the golgi apparatus. It is found in the trans-Golgi network. The protein resides in the trans-Golgi network membrane. Its subcellular location is the cytoplasmic vesicle. The protein localises to the phagosome. It localises to the phagosome membrane. It catalyses the reaction GTP + H2O = GDP + phosphate + H(+). Regulated by guanine nucleotide exchange factors (GEFs) including RIN3 and GAPVD1 which promote the exchange of bound GDP for free GTP. Regulated by GTPase activating proteins (GAPs) which increase the GTP hydrolysis activity. Inhibited by GDP dissociation inhibitors (GDIs) which prevent Rab-GDP dissociation. Functionally, the small GTPases Rab are key regulators of intracellular membrane trafficking, from the formation of transport vesicles to their fusion with membranes. Rabs cycle between an inactive GDP-bound form and an active GTP-bound form that is able to recruit to membranes different set of downstream effectors directly responsible for vesicle formation, movement, tethering and fusion. Required for the integrity and for normal function of the Golgi apparatus and the trans-Golgi network. Plays a role in insulin-stimulated translocation of GLUT4 to the cell membrane. Plays a role in the maturation of phagosomes that engulf pathogens, such as S.aureus and Mycobacterium. Plays a role in M6PR transport from the trans-Golgi network to endosomes. Plays a role in the internalization of EGFR from the cell membrane into endosomes. The sequence is that of Ras-related protein Rab-31 from Mus musculus (Mouse).